A 408-amino-acid chain; its full sequence is Neutral cholesterol ester hydrolase 1 (408 aa).

At 1 to 4 (MRSS) the chain is on the cytoplasmic side. A helical; Signal-anchor for type II membrane protein transmembrane segment spans residues 5 to 25 (CVLLAALLALAAYYVYIPLPS). The Lumenal segment spans residues 26–408 (AVSDPWKLML…SYIKWLDQNL (383 aa)). The Involved in the stabilization of the negatively charged intermediate by the formation of the oxyanion hole signature appears at 113–115 (HGG). S191 is an active-site residue. Residue N270 is glycosylated (N-linked (GlcNAc...) asparagine). Residue D348 is part of the active site. N-linked (GlcNAc...) asparagine glycosylation occurs at N367. H378 is an active-site residue. N389 carries an N-linked (GlcNAc...) asparagine glycan.

It belongs to the 'GDXG' lipolytic enzyme family. In terms of processing, N-glycosylated. As to expression, present in brain, heart, kidney, lung, spinal cord and testis but not liver (at protein level). Expressed in peritoneal macrophages and kidney.

The protein localises to the cell membrane. It localises to the microsome. The catalysed reaction is a 1-O-alkyl-2-acetyl-sn-glycerol + H2O = a 1-O-alkyl-sn-glycerol + acetate + H(+). It catalyses the reaction 1-O-hexadecyl-2-acetyl-sn-glycerol + H2O = 1-O-hexadecyl-sn-glycerol + acetate + H(+). It carries out the reaction a cholesterol ester + H2O = cholesterol + a fatty acid + H(+). The enzyme catalyses cholesteryl (9Z-octadecenoate) + H2O = cholesterol + (9Z)-octadecenoate + H(+). Inhibited by bulky trifluoromethyl ketones. Functionally, hydrolyzes 2-acetyl monoalkylglycerol ether (1-O-alkyl-2-acetyl-sn-glycerol), the penultimate precursor of the pathway for de novo synthesis of platelet-activating factor. May be responsible for the hydrolysis of cholesterol esters (such as cholesteryl (9Z-octadecenoate)) in macrophages. Also involved in organ detoxification by hydrolyzing exogenous organophosphorus compounds. The sequence is that of Neutral cholesterol ester hydrolase 1 (Nceh1) from Mus musculus (Mouse).